We begin with the raw amino-acid sequence, 218 residues long: Small ribosomal subunit protein uS5 (218 aa).

A disordered region spans residues 1-49 (MPGRQRRDGGSGPAGQNGPNTGDNRGGGDRRGGGRDDRRGGQSAEKSNH). The span at 26–49 (GGGDRRGGGRDDRRGGQSAEKSNH) shows a compositional bias: basic and acidic residues. Residues 49-112 (HIERVVTINR…EEARKSFFRV (64 aa)) form the S5 DRBM domain.

The protein belongs to the universal ribosomal protein uS5 family. As to quaternary structure, part of the 30S ribosomal subunit. Contacts proteins S4 and S8.

Its function is as follows. With S4 and S12 plays an important role in translational accuracy. Functionally, located at the back of the 30S subunit body where it stabilizes the conformation of the head with respect to the body. The polypeptide is Small ribosomal subunit protein uS5 (Rhodococcus jostii (strain RHA1)).